We begin with the raw amino-acid sequence, 145 residues long: Protein SprT-like (145 aa).

The 137-residue stretch at 5–141 (DYVREVSLAD…CGRCHGRLIK (137 aa)) folds into the SprT-like domain. Residue histidine 64 coordinates Zn(2+). Glutamate 65 is an active-site residue. Histidine 68 contributes to the Zn(2+) binding site.

This sequence belongs to the SprT family. The cofactor is Zn(2+).

It localises to the cytoplasm. This chain is Protein SprT-like, found in Streptococcus equi subsp. zooepidemicus (strain H70).